The sequence spans 84 residues: MSTIKVKSAHKDGQIKLEDLDVVCNKLCKRNNSVLFKLEKYLNKKLLSDPELTEIRDTILTVSGELSRLRDNLVTDGDSNEGLQ.

This is SPbeta prophage-derived uncharacterized protein YomY (yomY) from Bacillus subtilis (strain 168).